Here is a 187-residue protein sequence, read N- to C-terminus: MKIGKLNSIVIALFFKLLVACSIGLVERTNAALESSSKDLKNKILKIKKEATGKGVLFEAFTGLKTGSKVTSGGLALREAKVQAIVETGKFLKIIEEEALKLKETGNSGQFLAMFDLMLEVVESLEDVGIIGLKARVLEESKNNPINTAERLLAAKAQIENQLKVVKEKQNIENGGEKKNNKSKKKK.

An N-terminal signal peptide occupies residues 1-20; it reads MKIGKLNSIVIALFFKLLVA.

It belongs to the decorin-binding protein family.

Functionally, binds to decorin which may mediate the adherence of B.burgdorferi to collagen fibers in skin and other tissues. The protein is Decorin-binding protein B (dbpB) of Borreliella burgdorferi (strain ATCC 35210 / DSM 4680 / CIP 102532 / B31) (Borrelia burgdorferi).